The sequence spans 337 residues: Na(+)/H(+) exchange regulatory cofactor NHE-RF2 (337 aa).

The region spanning 11 to 91 (LCRLVRGEQG…QTQLLVVDKE (81 aa)) is the PDZ 1 domain. Residues 112 to 145 (LPPAHNPWEPKPDWACSGSLGSDTGQKDVNGPPR) are disordered. Residues Ser130, Ser183, Ser186, Ser254, Ser269, Ser280, and Ser303 each carry the phosphoserine modification. The region spanning 151–231 (LCHLRRGPQG…EARLLVVDPE (81 aa)) is the PDZ 2 domain. The disordered stretch occupies residues 242-337 (VPTEEHVEGP…NRKREIFSNF (96 aa)). A compositionally biased stretch (polar residues) spans 255–275 (PVTNGTSPAQLNGGSVCSSRS). Over residues 327-337 (WNRKREIFSNF) the composition is skewed to basic and acidic residues.

As to quaternary structure, homodimer, and heterodimer with NHERF1. Binds PDZK1. Interacts with SRY. Binds ADRB2, SLC9A3, P2RY1, P2YR2, RDX and LPAR2. Interacts with MCC. Found in a complex with EZR, PODXL and NHERF2. Interacts (via the PDZ domains) with PODXL (via the C-terminal PDZ-binding motif DTHL); interaction is detected in glomerular epithelium cells. Interacts with SGK1 and KCNJ1/ROMK1. Interacts (via the PDZ domains) with SLC26A6.

The protein localises to the endomembrane system. It is found in the nucleus. Its subcellular location is the apical cell membrane. Scaffold protein that connects plasma membrane proteins with members of the ezrin/moesin/radixin family and thereby helps to link them to the actin cytoskeleton and to regulate their surface expression. Necessary for cAMP-mediated phosphorylation and inhibition of SLC9A3. May also act as scaffold protein in the nucleus. This is Na(+)/H(+) exchange regulatory cofactor NHE-RF2 (Nherf2) from Mus musculus (Mouse).